The sequence spans 436 residues: Glucose-1-phosphate adenylyltransferase (436 aa).

Residues Tyr-112, Gly-178, Glu-193–Lys-194, and Ser-211 each bind alpha-D-glucose 1-phosphate.

This sequence belongs to the bacterial/plant glucose-1-phosphate adenylyltransferase family. Homotetramer.

It catalyses the reaction alpha-D-glucose 1-phosphate + ATP + H(+) = ADP-alpha-D-glucose + diphosphate. The protein operates within glycan biosynthesis; glycogen biosynthesis. Its function is as follows. Involved in the biosynthesis of ADP-glucose, a building block required for the elongation reactions to produce glycogen. Catalyzes the reaction between ATP and alpha-D-glucose 1-phosphate (G1P) to produce pyrophosphate and ADP-Glc. This Histophilus somni (strain 129Pt) (Haemophilus somnus) protein is Glucose-1-phosphate adenylyltransferase.